An 851-amino-acid polypeptide reads, in one-letter code: Phosphatidylinositol 4-kinase pik1 (851 aa).

Positions M1–I123 constitute a PIK helical domain. 4 positions are modified to phosphoserine: S202, S219, S222, and S235. At Y236 the chain carries Phosphotyrosine. The tract at residues L384–M404 is disordered. A compositionally biased stretch (acidic residues) spans T388–G399. Residues Y558–W836 enclose the PI3K/PI4K catalytic domain. The G-loop stretch occupies residues I564–Y570. The catalytic loop stretch occupies residues Q706–N714. An activation loop region spans residues H725–T749.

Belongs to the PI3/PI4-kinase family. Interacts with cdc4 and cam2.

It localises to the golgi apparatus. It is found in the nucleus. It carries out the reaction a 1,2-diacyl-sn-glycero-3-phospho-(1D-myo-inositol) + ATP = a 1,2-diacyl-sn-glycero-3-phospho-(1D-myo-inositol 4-phosphate) + ADP + H(+). Acts on phosphatidylinositol (PI) in the first committed step in the production of the second messenger inositol 1,4,5,-trisphosphate. PIK1 is part of a nuclear phosphoinositide cycle and could control cytokinesis through the actin cytoskeleton. This is Phosphatidylinositol 4-kinase pik1 (pik1) from Schizosaccharomyces pombe (strain 972 / ATCC 24843) (Fission yeast).